Reading from the N-terminus, the 213-residue chain is Gas vesicle protein F (213 aa).

Belongs to the gas vesicle GvpF/GvpL family. As to quaternary structure, binds GvpA.

It localises to the gas vesicle. A minor component of the gas vesicle, may be involved in preventing GvpA aggregation during gas vesicle nucleation. Gas vesicles are hollow, gas filled proteinaceous nanostructures found in some microorganisms. They allow positioning of halobacteria at the optimal depth for growth in the poorly aerated, shallow brine pools of their habitat. Its function is as follows. Expression of a 9.5 kb mc-vac DNA fragment containing 2 divergently transcribed regions (gvpD-gvpE-gvpF-gvpG-gvpH-gvpI-gvpJ-gvpK-gvpL-gvpM and gvpA-gvpC-gvpN-gvpO) allows H.volcanii to produce gas vesicles. This Haloferax mediterranei (strain ATCC 33500 / DSM 1411 / JCM 8866 / NBRC 14739 / NCIMB 2177 / R-4) (Halobacterium mediterranei) protein is Gas vesicle protein F.